The sequence spans 610 residues: Elongation factor 4 (610 aa).

Residues 11–193 (EKIRNFSIIA…QIVEKVPAPT (183 aa)) enclose the tr-type G domain. GTP contacts are provided by residues 23-28 (DHGKST) and 140-143 (NKID).

Belongs to the TRAFAC class translation factor GTPase superfamily. Classic translation factor GTPase family. LepA subfamily.

The protein localises to the cell membrane. The catalysed reaction is GTP + H2O = GDP + phosphate + H(+). In terms of biological role, required for accurate and efficient protein synthesis under certain stress conditions. May act as a fidelity factor of the translation reaction, by catalyzing a one-codon backward translocation of tRNAs on improperly translocated ribosomes. Back-translocation proceeds from a post-translocation (POST) complex to a pre-translocation (PRE) complex, thus giving elongation factor G a second chance to translocate the tRNAs correctly. Binds to ribosomes in a GTP-dependent manner. The chain is Elongation factor 4 from Streptococcus suis (strain 98HAH33).